Reading from the N-terminus, the 301-residue chain is Phosphatidylserine decarboxylase proenzyme (301 aa).

Active-site charge relay system; for autoendoproteolytic cleavage activity residues include aspartate 117, histidine 173, and serine 260. Serine 260 (schiff-base intermediate with substrate; via pyruvic acid; for decarboxylase activity) is an active-site residue. At serine 260 the chain carries Pyruvic acid (Ser); by autocatalysis.

This sequence belongs to the phosphatidylserine decarboxylase family. PSD-B subfamily. Prokaryotic type II sub-subfamily. Heterodimer of a large membrane-associated beta subunit and a small pyruvoyl-containing alpha subunit. It depends on pyruvate as a cofactor. Post-translationally, is synthesized initially as an inactive proenzyme. Formation of the active enzyme involves a self-maturation process in which the active site pyruvoyl group is generated from an internal serine residue via an autocatalytic post-translational modification. Two non-identical subunits are generated from the proenzyme in this reaction, and the pyruvate is formed at the N-terminus of the alpha chain, which is derived from the carboxyl end of the proenzyme. The autoendoproteolytic cleavage occurs by a canonical serine protease mechanism, in which the side chain hydroxyl group of the serine supplies its oxygen atom to form the C-terminus of the beta chain, while the remainder of the serine residue undergoes an oxidative deamination to produce ammonia and the pyruvoyl prosthetic group on the alpha chain. During this reaction, the Ser that is part of the protease active site of the proenzyme becomes the pyruvoyl prosthetic group, which constitutes an essential element of the active site of the mature decarboxylase.

Its subcellular location is the cell membrane. The enzyme catalyses a 1,2-diacyl-sn-glycero-3-phospho-L-serine + H(+) = a 1,2-diacyl-sn-glycero-3-phosphoethanolamine + CO2. It participates in phospholipid metabolism; phosphatidylethanolamine biosynthesis; phosphatidylethanolamine from CDP-diacylglycerol: step 2/2. Its function is as follows. Catalyzes the formation of phosphatidylethanolamine (PtdEtn) from phosphatidylserine (PtdSer). This chain is Phosphatidylserine decarboxylase proenzyme, found in Chlamydia trachomatis serovar L2 (strain ATCC VR-902B / DSM 19102 / 434/Bu).